Reading from the N-terminus, the 212-residue chain is Probable GTP-binding protein EngB (212 aa).

The 173-residue stretch at 38 to 210 (SLPEIAFVGK…KASLAKCIKP (173 aa)) folds into the EngB-type G domain. GTP contacts are provided by residues 46-53 (GKSNVGKS), 73-77 (GRTRQ), 91-94 (DLPG), 158-161 (TKSD), and 189-191 (VSN). Mg(2+)-binding residues include Ser-53 and Thr-75.

It belongs to the TRAFAC class TrmE-Era-EngA-EngB-Septin-like GTPase superfamily. EngB GTPase family. Mg(2+) serves as cofactor.

Its function is as follows. Necessary for normal cell division and for the maintenance of normal septation. The sequence is that of Probable GTP-binding protein EngB from Rickettsia africae (strain ESF-5).